Consider the following 503-residue polypeptide: CDK5 regulatory subunit-associated protein 3 (503 aa).

Short sequence motifs (shuffled ATG8-binding motif) lie at residues 266 to 269 (IDWG), 288 to 291 (IDWG), and 306 to 309 (IDWG). The segment at 268 to 503 (WGDFGVEAVS…RPVNLMGTSL (236 aa)) is required for interaction with UFL1 and mediates interaction with CHEK1. Positions 352–367 (DELMELEIFLSQRAVE) are RPL10a-binding domain (RBD). Lysine 447 participates in a covalent cross-link: Glycyl lysine isopeptide (Lys-Gly) (interchain with G-Cter in SUMO2).

This sequence belongs to the CDK5RAP3 family. As to quaternary structure, substrate adapter component of the UFM1 ribosome E3 ligase (UREL) complex, composed of UFL1, DDRGK1 and CDK5RAP3. Interaction with UFL1 anchors CDK5RAP3 in the cytoplasm, preventing its translocation to the nucleus which allows expression of the CCND1 cyclin and progression of cells through the G1/S transition. Interacts with ATG8 family proteins MAP1LC3A, MAP1LC3B, GABARAP, GABARAPL1 and GABARAPL2. Interacts with CDK5R1; competes with CDK5RAP1 and CDK5RAP2. Interacts with RELA. Interacts with CHEK1; may negatively regulate CHEK1 and thereby stimulate entry into mitosis. Interacts with CDKN2A/ARF and MDM2; forms a ternary complex involved in regulation of p53/TP53. Interacts with MAPK14. Interacts with CCNB1. Interacts with TUBG1; may regulate CDK5RAP3 in mitotic G2/M transition checkpoint. Post-translationally, may be phosphorylated by CDK5. In terms of processing, ubiquitinated. Probably triggers proteasomal degradation and is negatively regulated by UFL1. May be ufmylated. Post-translationally, cleaved by caspases early during apoptosis, the resulting peptides may play a role in rupture of the nuclear envelope. As to expression, widely expressed with higher expression in secretory tissues.

It is found in the endoplasmic reticulum membrane. The protein resides in the cytoplasm. It localises to the nucleus. The protein localises to the cytoskeleton. Its subcellular location is the microtubule organizing center. It is found in the centrosome. Functionally, substrate adapter of E3 ligase complexes mediating ufmylation, the covalent attachment of the ubiquitin-like modifier UFM1 to substrate proteins, and which is involved in various processes, such as ribosome recycling and reticulophagy (also called ER-phagy). As part of the UREL complex, plays a key role in ribosome recycling by promoting mono-ufmylation of RPL26/uL24 subunit of the 60S ribosome. Ufmylation of RPL26/uL24 occurs on free 60S ribosomes following ribosome dissociation: it weakens the junction between post-termination 60S subunits and SEC61 translocons, promoting release and recycling of the large ribosomal subunit from the endoplasmic reticulum membrane. Ufmylation of RPL26/uL24 and subsequent 60S ribosome recycling either take place after normal termination of translation or after ribosome stalling during cotranslational translocation at the endoplasmic reticulum. Within the UREL complex, CDK5RAP3 acts as a substrate adapter that constrains UFL1 ligase activity to mono-ufmylate RPL26/uL24 at 'Lys-134'. The UREL complex is also involved in reticulophagy in response to endoplasmic reticulum stress by promoting ufmylation of proteins such as CYB5R3, thereby promoting lysosomal degradation of ufmylated proteins. Also acts as a regulator of transcription: negatively regulates NF-kappa-B-mediated gene transcription through the control of RELA phosphorylation. Also regulates mitotic G2/M transition checkpoint and mitotic G2 DNA damage checkpoint. Through its interaction with CDKN2A/ARF and MDM2 may induce MDM2-dependent p53/TP53 ubiquitination, stabilization and activation in the nucleus, thereby promoting G1 cell cycle arrest and inhibition of cell proliferation. May also play a role in the rupture of the nuclear envelope during apoptosis. May regulate MAPK14 activity by regulating its dephosphorylation by PPM1D/WIP1. Required for liver development. The protein is CDK5 regulatory subunit-associated protein 3 of Mus musculus (Mouse).